The chain runs to 407 residues: Protein trichome birefringence-like 12 (407 aa).

A helical; Signal-anchor for type II membrane protein transmembrane segment spans residues 21–41; it reads SLLPRILLLSLLLLLFYSLIL. The GDS motif motif lies at 130 to 132; it reads GDS. The DCXHWCLPGXXDXWN motif motif lies at 379 to 393; the sequence is DCMHWCLPGVPDTWV.

This sequence belongs to the PC-esterase family. TBL subfamily.

Its subcellular location is the membrane. Its function is as follows. May act as a bridging protein that binds pectin and other cell wall polysaccharides. Probably involved in maintaining esterification of pectins. May be involved in the specific O-acetylation of cell wall polymers. The chain is Protein trichome birefringence-like 12 (TBL12) from Arabidopsis thaliana (Mouse-ear cress).